The primary structure comprises 246 residues: NH(3)-dependent NAD(+) synthetase (246 aa).

29–36 is an ATP binding site; the sequence is GLSGGIDS. Aspartate 35 is a Mg(2+) binding site. Residue arginine 110 coordinates deamido-NAD(+). Residue threonine 130 participates in ATP binding. Residue glutamate 135 coordinates Mg(2+). ATP-binding residues include lysine 159 and serine 181.

This sequence belongs to the NAD synthetase family. Homodimer.

It carries out the reaction deamido-NAD(+) + NH4(+) + ATP = AMP + diphosphate + NAD(+) + H(+). The protein operates within cofactor biosynthesis; NAD(+) biosynthesis; NAD(+) from deamido-NAD(+) (ammonia route): step 1/1. Catalyzes the ATP-dependent amidation of deamido-NAD to form NAD. Uses ammonia as a nitrogen source. The polypeptide is NH(3)-dependent NAD(+) synthetase (Campylobacter jejuni subsp. jejuni serotype O:23/36 (strain 81-176)).